Consider the following 464-residue polypeptide: Cysteine--tRNA ligase (464 aa).

A Zn(2+)-binding site is contributed by Cys32. The 'HIGH' region signature appears at 34–44 (VTVYDDCHIGH). 3 residues coordinate Zn(2+): Cys213, His238, and Glu242. A 'KMSKS' region motif is present at residues 270–274 (KMSKS). Lys273 is a binding site for ATP.

This sequence belongs to the class-I aminoacyl-tRNA synthetase family. As to quaternary structure, monomer. The cofactor is Zn(2+).

It is found in the cytoplasm. It carries out the reaction tRNA(Cys) + L-cysteine + ATP = L-cysteinyl-tRNA(Cys) + AMP + diphosphate. This is Cysteine--tRNA ligase from Francisella tularensis subsp. holarctica (strain LVS).